The chain runs to 239 residues: uncharacterized protein (239 aa).

The disordered stretch occupies residues 193–214 (RKRKLNLSDGENKAKSPYSSIS).

It is found in the nucleus. This is an uncharacterized protein from Schizosaccharomyces pombe (strain 972 / ATCC 24843) (Fission yeast).